Here is a 145-residue protein sequence, read N- to C-terminus: Ribonuclease H (145 aa).

In terms of domain architecture, RNase H type-1 spans 2 to 143 (SKKEVAIYTD…ADSLARKAII (142 aa)). The Mg(2+) site is built by Asp-11, Glu-49, Asp-71, and Asp-135.

This sequence belongs to the RNase H family. Monomer. The cofactor is Mg(2+).

The protein localises to the cytoplasm. It carries out the reaction Endonucleolytic cleavage to 5'-phosphomonoester.. Functionally, endonuclease that specifically degrades the RNA of RNA-DNA hybrids. This chain is Ribonuclease H, found in Wolbachia sp. subsp. Drosophila simulans (strain wRi).